A 154-amino-acid polypeptide reads, in one-letter code: uncharacterized protein (154 aa).

It belongs to the MG032/MG096/MG288 family.

This is an uncharacterized protein from Mycoplasma pneumoniae (strain ATCC 29342 / M129 / Subtype 1) (Mycoplasmoides pneumoniae).